A 141-amino-acid chain; its full sequence is uncharacterized protein (141 aa).

Residues 24–52 adopt a coiled-coil conformation; sequence KVQTALQKEAKTIKREQKKIKDEIDTFKT.

This is an uncharacterized protein from Invertebrate iridescent virus 6 (IIV-6).